Reading from the N-terminus, the 477-residue chain is UDP-N-acetylmuramate--L-alanine ligase (477 aa).

Residue 115–121 (GTHGKTT) participates in ATP binding.

Belongs to the MurCDEF family.

It is found in the cytoplasm. It catalyses the reaction UDP-N-acetyl-alpha-D-muramate + L-alanine + ATP = UDP-N-acetyl-alpha-D-muramoyl-L-alanine + ADP + phosphate + H(+). It participates in cell wall biogenesis; peptidoglycan biosynthesis. Its function is as follows. Cell wall formation. The polypeptide is UDP-N-acetylmuramate--L-alanine ligase (Gluconobacter oxydans (strain 621H) (Gluconobacter suboxydans)).